Here is a 179-residue protein sequence, read N- to C-terminus: Sec-independent protein translocase protein TatB (179 aa).

The chain crosses the membrane as a helical span at residues 1–21 (MLDLGLSKMALIGVVALVVLG). Residues 101-115 (GAAGDAGSVGSPGSD) show a composition bias toward low complexity. The disordered stretch occupies residues 101-134 (GAAGDAGSVGSPGSDTPAAPSWRGSSAALAPKRR).

It belongs to the TatB family. As to quaternary structure, the Tat system comprises two distinct complexes: a TatABC complex, containing multiple copies of TatA, TatB and TatC subunits, and a separate TatA complex, containing only TatA subunits. Substrates initially bind to the TatABC complex, which probably triggers association of the separate TatA complex to form the active translocon.

Its subcellular location is the cell inner membrane. In terms of biological role, part of the twin-arginine translocation (Tat) system that transports large folded proteins containing a characteristic twin-arginine motif in their signal peptide across membranes. Together with TatC, TatB is part of a receptor directly interacting with Tat signal peptides. TatB may form an oligomeric binding site that transiently accommodates folded Tat precursor proteins before their translocation. This is Sec-independent protein translocase protein TatB from Burkholderia orbicola (strain AU 1054).